Reading from the N-terminus, the 216-residue chain is Protein-methionine-sulfoxide reductase heme-binding subunit MsrQ (216 aa).

5 consecutive transmembrane segments (helical) span residues 16–36 (IWAL…LGAT), 48–68 (EHLL…ITPI), 82–102 (ALGL…MVLD), 119–139 (FITI…TSNI), and 155–175 (LVYV…KVVG).

It belongs to the MsrQ family. Heterodimer of a catalytic subunit (MsrP) and a heme-binding subunit (MsrQ). FMN serves as cofactor. The cofactor is heme b.

It localises to the cell inner membrane. Part of the MsrPQ system that repairs oxidized periplasmic proteins containing methionine sulfoxide residues (Met-O), using respiratory chain electrons. Thus protects these proteins from oxidative-stress damage caused by reactive species of oxygen and chlorine generated by the host defense mechanisms. MsrPQ is essential for the maintenance of envelope integrity under bleach stress, rescuing a wide series of structurally unrelated periplasmic proteins from methionine oxidation. MsrQ provides electrons for reduction to the reductase catalytic subunit MsrP, using the quinone pool of the respiratory chain. The protein is Protein-methionine-sulfoxide reductase heme-binding subunit MsrQ of Rhizobium meliloti (strain 1021) (Ensifer meliloti).